The following is a 207-amino-acid chain: GTP-binding protein RHO1 (207 aa).

18 to 25 (GDGACGKT) provides a ligand contact to GTP. The short motif at 40-48 (YVPTVFDNY) is the Effector region element. GTP-binding positions include 65-69 (DTAGQ) and 123-126 (CKAD). The segment at 187-207 (GKQGKSKAKSDKKKKKKCVVL) is disordered. A compositionally biased stretch (basic residues) spans 190-207 (GKSKAKSDKKKKKKCVVL). Cys204 is subject to Cysteine methyl ester. The S-geranylgeranyl cysteine moiety is linked to residue Cys204. A propeptide spans 205–207 (VVL) (removed in mature form).

Belongs to the small GTPase superfamily. Rho family.

It localises to the cell membrane. Functionally, involved in the regulation of actin polarization. Rho proteins are required for distinct steps during polarized hyphal growth of A.gossypii. The polypeptide is GTP-binding protein RHO1 (RHO1) (Eremothecium gossypii (strain ATCC 10895 / CBS 109.51 / FGSC 9923 / NRRL Y-1056) (Yeast)).